Consider the following 639-residue polypeptide: DNA primase (639 aa).

The CHC2-type zinc-finger motif lies at 41–65 (CPFHNEKSPSFHVRPNHGHFHCFGC). The 87-residue stretch at 262–348 (HQAVVVEGYT…AGQSFVAVAP (87 aa)) folds into the Toprim domain. Positions 268, 319, and 321 each coordinate Mg(2+). The segment at 460–479 (RAAQRPTAGPPTELAVRPDP) is disordered.

It belongs to the DnaG primase family. As to quaternary structure, monomer. Interacts with DnaB. The cofactor is Zn(2+). It depends on Mg(2+) as a cofactor.

It catalyses the reaction ssDNA + n NTP = ssDNA/pppN(pN)n-1 hybrid + (n-1) diphosphate.. RNA polymerase that catalyzes the synthesis of short RNA molecules used as primers for DNA polymerase during DNA replication. This chain is DNA primase, found in Mycobacterium bovis (strain ATCC BAA-935 / AF2122/97).